The chain runs to 538 residues: MYNNNSSTSSDSSNSEEKANAQHASSTDSTSEHTDPAVADEGFPAEQYQSADLEKQQLLIEEGPGGFPYITNPERFYVSLEPSDPRLAVNWPTHVKILHVALLAFTTLTASWGSSVFSAAATIFAAKYHIGLTVALLGMSLYVCGFASGPILWAPISELVGRKIPLIVGMFMFSIFSIAVAVAKDVQTVMICRFFSGFCASSPLSVVAAAFADMFDNKTRGPAVCIFACITFAGPLIGPIAGGFLAKSYLGWRWTEYITSFMGFFSTLCLLFMKECYSRTITEQEAARLRVEYNNNFIRAKSEEEYIDFKALAKRYLAVPFVLLFCEPIVFLLTLYMSFVYGILYLLLEAYPIIFAEKRHFSLGVDALPYIGLLVGVILGAALIAYFQGYYNRKLDANGGKPVPEARLPPMMIGSVLFPAGIFWLAWSGYYTHVHWIVPTLSGLLTGCGILTIFMQSLIYLIDAYLFRAASVIAANTIMRSLVAAGFPLFAVQMFHNMGIGWAGSLLGFIATALIPIPTLFFIFGKRIRLMSKNTVNL.

The span at 1-13 (MYNNNSSTSSDSS) shows a compositional bias: low complexity. Positions 1-43 (MYNNNSSTSSDSSNSEEKANAQHASSTDSTSEHTDPAVADEGF) are disordered. 12 helical membrane-spanning segments follow: residues 97 to 117 (ILHV…SSVF), 134 to 154 (VALL…ILWA), 163 to 183 (KIPL…VAVA), 194 to 214 (FFSG…FADM), 226 to 246 (IFAC…GFLA), 254 to 274 (WTEY…LFMK), 328 to 348 (PIVF…YLLL), 367 to 387 (ALPY…IAYF), 408 to 428 (LPPM…LAWS), 434 to 454 (VHWI…LTIF), 458 to 478 (LIYL…ANTI), and 504 to 524 (GSLL…FFIF).

The protein belongs to the major facilitator superfamily. CAR1 family.

Its subcellular location is the endoplasmic reticulum. It localises to the membrane. This is an uncharacterized protein from Schizosaccharomyces pombe (strain 972 / ATCC 24843) (Fission yeast).